Reading from the N-terminus, the 194-residue chain is CASP-like protein 2D1 (194 aa).

Basic and acidic residues predominate over residues 1-16 (MRDNNNNNTREEERSS). A disordered region spans residues 1–26 (MRDNNNNNTREEERSSSSKQQQPQAP). At 1-30 (MRDNNNNNTREEERSSSSKQQQPQAPMSLK) the chain is on the cytoplasmic side. A helical membrane pass occupies residues 31–51 (IIDSCLRLSVVPLSVATIWLT). The Extracellular segment spans residues 52–74 (VTNHESNPDYGNLEYNSIMGLKY). The helical transmembrane segment at 75–95 (MVGVSAISAIYALLSTVSSWV) threads the bilayer. At 96–110 (TCLVSKAWLFFIPDQ) the chain is on the cytoplasmic side. The helical transmembrane segment at 111-133 (VLAYVMTTSVAGATEIVYLLNKG) threads the bilayer. Topologically, residues 134 to 152 (DKIVTWSEMCSSYPHYCSK) are extracellular. The helical transmembrane segment at 153-173 (LTIALGLHVFVLFFFLFLSVI) threads the bilayer. The Cytoplasmic segment spans residues 174–194 (SAYRAFSPFDPPCDSQTNNDA).

This sequence belongs to the Casparian strip membrane proteins (CASP) family. As to quaternary structure, homodimer and heterodimers.

The protein localises to the cell membrane. The chain is CASP-like protein 2D1 from Arabidopsis thaliana (Mouse-ear cress).